Reading from the N-terminus, the 414-residue chain is Histidine--tRNA ligase (414 aa).

It belongs to the class-II aminoacyl-tRNA synthetase family. In terms of assembly, homodimer.

The protein localises to the cytoplasm. The catalysed reaction is tRNA(His) + L-histidine + ATP = L-histidyl-tRNA(His) + AMP + diphosphate + H(+). The protein is Histidine--tRNA ligase of Rickettsia rickettsii (strain Iowa).